Consider the following 1080-residue polypeptide: Histone deacetylase 4 (1080 aa).

Disordered regions lie at residues 1-25 (MSSQ…PPRV), 132-165 (KLEQ…ESAV), and 205-312 (TQHS…ISAE). The span at 132 to 162 (KLEQHRQEQELEKQHREQKLQQLKNKEKGKE) shows a compositional bias: basic and acidic residues. The span at 205–224 (TQHSSLDQSSPPQSGVSGTY) shows a compositional bias: polar residues. Composition is skewed to basic and acidic residues over residues 233 to 244 (DSKDDFPLRKTA) and 258 to 273 (KVAE…RKDG). The span at 289 to 312 (SACNSAPGSGPSSPNNSSNNISAE) shows a compositional bias: low complexity. A PxLPxI/L motif is present at residues 348–353 (PSLPNI). Disordered regions lie at residues 506 to 527 (KPNE…ELRE), 558 to 579 (EPIE…GQRQ), and 622 to 646 (PLSR…PTKP). Residues 509-527 (EPARQHESHPEETEEELRE) are compositionally biased toward basic and acidic residues. A compositionally biased stretch (acidic residues) spans 560 to 571 (IESDEEEAEPQQ). Polar residues predominate over residues 625–637 (RAQSSPASATFPM). The tract at residues 651 to 1080 (GLVYDTLMLK…DEPMEEEPPL (430 aa)) is histone deacetylase. The Zn(2+) site is built by Cys-663, Cys-665, His-671, and Cys-747. His-799 is an active-site residue. A disordered region spans residues 1055 to 1080 (MASLSVGVKPAEKRPDDEPMEEEPPL).

This sequence belongs to the histone deacetylase family. HD type 2 subfamily.

It localises to the nucleus. The catalysed reaction is N(6)-acetyl-L-lysyl-[histone] + H2O = L-lysyl-[histone] + acetate. Its function is as follows. Responsible for the deacetylation of lysine residues on the N-terminal part of the core histones (H2A, H2B, H3 and H4). Histone deacetylation gives a tag for epigenetic repression and plays an important role in transcriptional regulation, cell cycle progression and developmental events. Histone deacetylases act via the formation of large multiprotein complexes. The chain is Histone deacetylase 4 (HDAC4) from Gallus gallus (Chicken).